Here is a 299-residue protein sequence, read N- to C-terminus: Leucine zipper transcription factor-like protein 1 (299 aa).

A coiled-coil region spans residues 96 to 296 (LKLQTDISEL…DLRKRLAQYE (201 aa)). Residues 145-299 (GTAELLNKEI…KRLAQYEPED (155 aa)) are interaction with BSS9.

Belongs to the LZTFL1 family. As to quaternary structure, self-associates. Interacts with BBS9; the interaction mediates the association of LZTL1 with the BBsome complex and regulates BBSome ciliary trafficking.

Its subcellular location is the cytoplasm. Regulates ciliary localization of the BBSome complex. Together with the BBSome complex, controls SMO ciliary trafficking and contributes to the sonic hedgehog (SHH) pathway regulation. May play a role in neurite outgrowth. May have tumor suppressor function. This Pongo abelii (Sumatran orangutan) protein is Leucine zipper transcription factor-like protein 1 (LZTFL1).